The sequence spans 160 residues: Large ribosomal subunit protein eL21A (160 aa).

Lys-32 is covalently cross-linked (Glycyl lysine isopeptide (Lys-Gly) (interchain with G-Cter in ubiquitin)).

It belongs to the eukaryotic ribosomal protein eL21 family. As to quaternary structure, component of the large ribosomal subunit (LSU). Mature yeast ribosomes consist of a small (40S) and a large (60S) subunit. The 40S small subunit contains 1 molecule of ribosomal RNA (18S rRNA) and 33 different proteins (encoded by 57 genes). The large 60S subunit contains 3 rRNA molecules (25S, 5.8S and 5S rRNA) and 46 different proteins (encoded by 81 genes).

It is found in the cytoplasm. Its function is as follows. Component of the ribosome, a large ribonucleoprotein complex responsible for the synthesis of proteins in the cell. The small ribosomal subunit (SSU) binds messenger RNAs (mRNAs) and translates the encoded message by selecting cognate aminoacyl-transfer RNA (tRNA) molecules. The large subunit (LSU) contains the ribosomal catalytic site termed the peptidyl transferase center (PTC), which catalyzes the formation of peptide bonds, thereby polymerizing the amino acids delivered by tRNAs into a polypeptide chain. The nascent polypeptides leave the ribosome through a tunnel in the LSU and interact with protein factors that function in enzymatic processing, targeting, and the membrane insertion of nascent chains at the exit of the ribosomal tunnel. The polypeptide is Large ribosomal subunit protein eL21A (Saccharomyces cerevisiae (strain ATCC 204508 / S288c) (Baker's yeast)).